A 247-amino-acid polypeptide reads, in one-letter code: Cell division protein ZapD (247 aa).

This sequence belongs to the ZapD family. As to quaternary structure, interacts with FtsZ.

Its subcellular location is the cytoplasm. Functionally, cell division factor that enhances FtsZ-ring assembly. Directly interacts with FtsZ and promotes bundling of FtsZ protofilaments, with a reduction in FtsZ GTPase activity. The chain is Cell division protein ZapD from Escherichia fergusonii (strain ATCC 35469 / DSM 13698 / CCUG 18766 / IAM 14443 / JCM 21226 / LMG 7866 / NBRC 102419 / NCTC 12128 / CDC 0568-73).